Consider the following 379-residue polypeptide: Arginine biosynthesis bifunctional protein ArgJ (379 aa).

Substrate contacts are provided by Thr-141, Lys-163, Thr-174, Glu-252, Asn-374, and Thr-379. Thr-174 serves as the catalytic Nucleophile.

This sequence belongs to the ArgJ family. Heterotetramer of two alpha and two beta chains.

Its subcellular location is the cytoplasm. The catalysed reaction is N(2)-acetyl-L-ornithine + L-glutamate = N-acetyl-L-glutamate + L-ornithine. The enzyme catalyses L-glutamate + acetyl-CoA = N-acetyl-L-glutamate + CoA + H(+). Its pathway is amino-acid biosynthesis; L-arginine biosynthesis; L-ornithine and N-acetyl-L-glutamate from L-glutamate and N(2)-acetyl-L-ornithine (cyclic): step 1/1. It functions in the pathway amino-acid biosynthesis; L-arginine biosynthesis; N(2)-acetyl-L-ornithine from L-glutamate: step 1/4. In terms of biological role, catalyzes two activities which are involved in the cyclic version of arginine biosynthesis: the synthesis of N-acetylglutamate from glutamate and acetyl-CoA as the acetyl donor, and of ornithine by transacetylation between N(2)-acetylornithine and glutamate. The chain is Arginine biosynthesis bifunctional protein ArgJ from Aquifex aeolicus (strain VF5).